The sequence spans 267 residues: 4-hydroxy-tetrahydrodipicolinate reductase (267 aa).

Residues 8–13, Glu-34, 98–100, and 122–125 each bind NAD(+); these read GIAGRM, GST, and SPNM. His-155 functions as the Proton donor/acceptor in the catalytic mechanism. Residue His-156 coordinates (S)-2,3,4,5-tetrahydrodipicolinate. The Proton donor role is filled by Lys-159. Position 165 to 166 (165 to 166) interacts with (S)-2,3,4,5-tetrahydrodipicolinate; it reads GT.

Belongs to the DapB family.

Its subcellular location is the cytoplasm. The enzyme catalyses (S)-2,3,4,5-tetrahydrodipicolinate + NAD(+) + H2O = (2S,4S)-4-hydroxy-2,3,4,5-tetrahydrodipicolinate + NADH + H(+). It carries out the reaction (S)-2,3,4,5-tetrahydrodipicolinate + NADP(+) + H2O = (2S,4S)-4-hydroxy-2,3,4,5-tetrahydrodipicolinate + NADPH + H(+). It functions in the pathway amino-acid biosynthesis; L-lysine biosynthesis via DAP pathway; (S)-tetrahydrodipicolinate from L-aspartate: step 4/4. In terms of biological role, catalyzes the conversion of 4-hydroxy-tetrahydrodipicolinate (HTPA) to tetrahydrodipicolinate. The protein is 4-hydroxy-tetrahydrodipicolinate reductase of Syntrophobacter fumaroxidans (strain DSM 10017 / MPOB).